We begin with the raw amino-acid sequence, 307 residues long: Small ribosomal subunit biogenesis GTPase RsgA (307 aa).

The interval 1 to 21 (MPSEHPFSDGISTPNPKETMN) is disordered. Over residues 10 to 21 (GISTPNPKETMN) the composition is skewed to polar residues. In terms of domain architecture, CP-type G spans 85–242 (RQDAWKTKLI…LIDSPGLQEF (158 aa)). Residues 135–138 (NKAD) and 184–192 (GQSGMGKST) each bind GTP. Zn(2+) is bound by residues C266, C271, H273, and C279.

The protein belongs to the TRAFAC class YlqF/YawG GTPase family. RsgA subfamily. As to quaternary structure, monomer. Associates with 30S ribosomal subunit, binds 16S rRNA. Zn(2+) is required as a cofactor.

The protein localises to the cytoplasm. In terms of biological role, one of several proteins that assist in the late maturation steps of the functional core of the 30S ribosomal subunit. Helps release RbfA from mature subunits. May play a role in the assembly of ribosomal proteins into the subunit. Circularly permuted GTPase that catalyzes slow GTP hydrolysis, GTPase activity is stimulated by the 30S ribosomal subunit. The sequence is that of Small ribosomal subunit biogenesis GTPase RsgA from Neisseria gonorrhoeae (strain ATCC 700825 / FA 1090).